The following is a 220-amino-acid chain: Type IV major pilin protein PilA (220 aa).

Positions 1–12 (MRVSRFNPRNRG) are cleaved as a propeptide — leader sequence. Phe-13 bears the N-methylphenylalanine mark. Residues 13 to 33 (FTLIELMIVVAIIGILAAIAI) traverse the membrane as a helical segment.

Belongs to the N-Me-Phe pilin family.

It localises to the fimbrium. The protein resides in the membrane. The two-component PilS2/PilR2 is required for proper assembly of T4P and regulation. Functionally, major component of the type IV pili that are required for social gliding motility through cycles of extension and retraction. Extended pili are composed of thousands of copies of PilA and retract upon binding to extracellular polysaccharides and thereby pull the cell forward. This is Type IV major pilin protein PilA (pilA) from Myxococcus xanthus (strain DK1622).